Consider the following 130-residue polypeptide: DNA-directed RNA polymerase subunit omega (130 aa).

Disordered regions lie at residues E79–D98 and T108–E130.

This sequence belongs to the RNA polymerase subunit omega family. The RNAP catalytic core consists of 2 alpha, 1 beta, 1 beta' and 1 omega subunit. When a sigma factor is associated with the core the holoenzyme is formed, which can initiate transcription.

The catalysed reaction is RNA(n) + a ribonucleoside 5'-triphosphate = RNA(n+1) + diphosphate. Functionally, promotes RNA polymerase assembly. Latches the N- and C-terminal regions of the beta' subunit thereby facilitating its interaction with the beta and alpha subunits. This chain is DNA-directed RNA polymerase subunit omega, found in Nitrobacter winogradskyi (strain ATCC 25391 / DSM 10237 / CIP 104748 / NCIMB 11846 / Nb-255).